We begin with the raw amino-acid sequence, 566 residues long: Alpha-amylase (566 aa).

The N-terminal stretch at 1-28 (MARRLATASLAVLAAAATALTAPTPAAA) is a signal peptide. Residues Asn120, Gln166, and Asp175 each coordinate Ca(2+). The active-site Nucleophile is the Asp205. Position 209 (His209) interacts with Ca(2+). The active-site Proton donor is Glu232. One can recognise a CBM20 domain in the interval 465 to 566 (GPGTGQTSAS…ALTLNDTWRG (102 aa)).

Belongs to the glycosyl hydrolase 13 family. As to quaternary structure, monomer. Ca(2+) serves as cofactor.

The catalysed reaction is Endohydrolysis of (1-&gt;4)-alpha-D-glucosidic linkages in polysaccharides containing three or more (1-&gt;4)-alpha-linked D-glucose units.. This Streptomyces griseus protein is Alpha-amylase (amy).